Consider the following 62-residue polypeptide: Sperm protamine P1 (62 aa).

Positions 1–62 are disordered; the sequence is MARYRHSRSR…RYSRRRRRRY (62 aa).

This sequence belongs to the protamine P1 family. As to expression, testis.

Its subcellular location is the nucleus. It is found in the chromosome. In terms of biological role, protamines substitute for histones in the chromatin of sperm during the haploid phase of spermatogenesis. They compact sperm DNA into a highly condensed, stable and inactive complex. The sequence is that of Sperm protamine P1 (PRM1) from Dendrolagus dorianus (Doria's tree-kangaroo).